We begin with the raw amino-acid sequence, 1376 residues long: DNA-directed RNA polymerase subunit beta (1376 aa).

The span at 1357–1368 (NSKTGRQTNPGT) shows a compositional bias: polar residues. The interval 1357–1376 (NSKTGRQTNPGTRENLPAAE) is disordered.

It belongs to the RNA polymerase beta chain family. In terms of assembly, the RNAP catalytic core consists of 2 alpha, 1 beta, 1 beta' and 1 omega subunit. When a sigma factor is associated with the core the holoenzyme is formed, which can initiate transcription.

It catalyses the reaction RNA(n) + a ribonucleoside 5'-triphosphate = RNA(n+1) + diphosphate. Functionally, DNA-dependent RNA polymerase catalyzes the transcription of DNA into RNA using the four ribonucleoside triphosphates as substrates. The chain is DNA-directed RNA polymerase subunit beta from Azorhizobium caulinodans (strain ATCC 43989 / DSM 5975 / JCM 20966 / LMG 6465 / NBRC 14845 / NCIMB 13405 / ORS 571).